A 166-amino-acid chain; its full sequence is Large ribosomal subunit protein uL10 (166 aa).

This sequence belongs to the universal ribosomal protein uL10 family. Part of the ribosomal stalk of the 50S ribosomal subunit. The N-terminus interacts with L11 and the large rRNA to form the base of the stalk. The C-terminus forms an elongated spine to which L12 dimers bind in a sequential fashion forming a multimeric L10(L12)X complex.

In terms of biological role, forms part of the ribosomal stalk, playing a central role in the interaction of the ribosome with GTP-bound translation factors. The polypeptide is Large ribosomal subunit protein uL10 (Bacillus velezensis (strain DSM 23117 / BGSC 10A6 / LMG 26770 / FZB42) (Bacillus amyloliquefaciens subsp. plantarum)).